A 248-amino-acid chain; its full sequence is Small ribosomal subunit protein eS6 (248 aa).

Residues 213 to 248 (LLAQRKKESKAKREEAKRRRSASMRESKSSISSDKK) are disordered. The segment covering 223–248 (AKREEAKRRRSASMRESKSSISSDKK) has biased composition (basic and acidic residues).

The protein belongs to the eukaryotic ribosomal protein eS6 family. As to quaternary structure, component of the small ribosomal subunit. Part of the small subunit (SSU) processome, composed of more than 70 proteins and the RNA chaperone small nucleolar RNA (snoRNA) U3. Post-translationally, ribosomal protein S6 is the major substrate of protein kinases in eukaryote ribosomes.

The protein resides in the cytoplasm. The protein localises to the nucleus. It localises to the nucleolus. Its function is as follows. Component of the 40S small ribosomal subunit. Plays an important role in controlling cell growth and proliferation through the selective translation of particular classes of mRNA. Part of the small subunit (SSU) processome, first precursor of the small eukaryotic ribosomal subunit. During the assembly of the SSU processome in the nucleolus, many ribosome biogenesis factors, an RNA chaperone and ribosomal proteins associate with the nascent pre-rRNA and work in concert to generate RNA folding, modifications, rearrangements and cleavage as well as targeted degradation of pre-ribosomal RNA by the RNA exosome. This chain is Small ribosomal subunit protein eS6 (RpS6), found in Glossina morsitans morsitans (Savannah tsetse fly).